A 259-amino-acid chain; its full sequence is Adenylosuccinate synthetase (259 aa).

GTP is bound by residues 3-9 (GDEGKGK) and 31-33 (GHT). Aspartate 4 acts as the Proton acceptor in catalysis. Mg(2+) contacts are provided by aspartate 4 and glycine 31. 4-7 (DEGK) contributes to the IMP binding site. The active-site Proton donor is the histidine 32. Residues threonine 120, arginine 134, glutamine 215, and threonine 230 each coordinate IMP.

Belongs to the adenylosuccinate synthetase family. Homodimer. Mg(2+) is required as a cofactor.

It localises to the cytoplasm. The catalysed reaction is IMP + L-aspartate + GTP = N(6)-(1,2-dicarboxyethyl)-AMP + GDP + phosphate + 2 H(+). It participates in purine metabolism; AMP biosynthesis via de novo pathway; AMP from IMP: step 1/2. Functionally, plays an important role in the de novo pathway of purine nucleotide biosynthesis. Catalyzes the first committed step in the biosynthesis of AMP from IMP. This is Adenylosuccinate synthetase from Aggregatibacter actinomycetemcomitans (Actinobacillus actinomycetemcomitans).